The chain runs to 165 residues: Lipoprotein signal peptidase (165 aa).

2 helical membrane passes run 66–86 (WQFWLFLVATVLAVWAILSLT) and 91–111 (NEPVLYTAFGLIMGGALGNLV). Active-site residues include Asp-121 and Asp-139. A helical membrane pass occupies residues 132-152 (WPAFNVADIAICIGAFLAFVA).

The protein belongs to the peptidase A8 family.

Its subcellular location is the cell inner membrane. The catalysed reaction is Release of signal peptides from bacterial membrane prolipoproteins. Hydrolyzes -Xaa-Yaa-Zaa-|-(S,diacylglyceryl)Cys-, in which Xaa is hydrophobic (preferably Leu), and Yaa (Ala or Ser) and Zaa (Gly or Ala) have small, neutral side chains.. It participates in protein modification; lipoprotein biosynthesis (signal peptide cleavage). This protein specifically catalyzes the removal of signal peptides from prolipoproteins. The sequence is that of Lipoprotein signal peptidase from Nitratidesulfovibrio vulgaris (strain DP4) (Desulfovibrio vulgaris).